Reading from the N-terminus, the 180-residue chain is MFEATTILGYRGEFNNKKFALIGGDGQVTLGNCVVKANATKIRSLYHNQVLSGFAGSTADAFSLFDMFERILESKKGDLFKSVVDFSKEWRKDKYLRRLEAMMIVLNLDHIFILSGTGDVLEAEDNKIAAIGSGGNYALSAARALDCFAHLEPKKLVEESLKIAGDLCIYTNTNIKILEL.

Thr-5 is a catalytic residue. Positions 165, 168, and 171 each coordinate Na(+).

Belongs to the peptidase T1B family. HslV subfamily. A double ring-shaped homohexamer of HslV is capped on each side by a ring-shaped HslU homohexamer. The assembly of the HslU/HslV complex is dependent on binding of ATP.

It is found in the cytoplasm. The catalysed reaction is ATP-dependent cleavage of peptide bonds with broad specificity.. Allosterically activated by HslU binding. In terms of biological role, protease subunit of a proteasome-like degradation complex believed to be a general protein degrading machinery. The chain is ATP-dependent protease subunit HslV from Helicobacter acinonychis (strain Sheeba).